Consider the following 549-residue polypeptide: Cation/acetate symporter ActP (549 aa).

The next 13 membrane-spanning stretches (helical) occupy residues 33–53 (WQAIIMFLIFVLLTLYITYWA), 76–96 (GLAIAGDFMSAASFLGISALV), 103–123 (GLIYSLGFLVGWPIILFLIAE), 149–169 (LSACGSLVVVALYLIAQMVGA), 183–203 (IAVVLVGVLMVMYVLFGGMLA), 206–226 (WVQIIKAVLLLFGASFMAFMV), 262–282 (ISALSLGLGLMFGTAGLPHIL), 303–323 (GFMGYFYILTFIIGFGAIMLV), 355–375 (LFLGFISAVAFATILAVVAGL), 404–424 (VSKITVLILGVVAILLGILFE), 428–448 (IAFMVGLAFSIAASCNFPIIL), 463–483 (IGGWLGLLTAVILMVLGPTIW), and 493–513 (IFPYEYPALFSIAVAFIGIWF).

This sequence belongs to the sodium:solute symporter (SSF) (TC 2.A.21) family.

Its subcellular location is the cell inner membrane. Functionally, transports acetate. This is Cation/acetate symporter ActP from Enterobacter sp. (strain 638).